The chain runs to 609 residues: Elongation factor 4 (609 aa).

A tr-type G domain is found at 11-193 (SRIRNFSIIA…QIVEKVPAPS (183 aa)). GTP-binding positions include 23 to 28 (DHGKST) and 140 to 143 (NKID).

Belongs to the TRAFAC class translation factor GTPase superfamily. Classic translation factor GTPase family. LepA subfamily.

It localises to the cell membrane. It carries out the reaction GTP + H2O = GDP + phosphate + H(+). Functionally, required for accurate and efficient protein synthesis under certain stress conditions. May act as a fidelity factor of the translation reaction, by catalyzing a one-codon backward translocation of tRNAs on improperly translocated ribosomes. Back-translocation proceeds from a post-translocation (POST) complex to a pre-translocation (PRE) complex, thus giving elongation factor G a second chance to translocate the tRNAs correctly. Binds to ribosomes in a GTP-dependent manner. The protein is Elongation factor 4 of Halalkalibacterium halodurans (strain ATCC BAA-125 / DSM 18197 / FERM 7344 / JCM 9153 / C-125) (Bacillus halodurans).